The chain runs to 37 residues: MKVRPSVRKMCEKCRIIRRHRKVMVICNNPKHKQRQG.

The protein belongs to the bacterial ribosomal protein bL36 family.

It is found in the plastid. The protein resides in the chloroplast. The polypeptide is Large ribosomal subunit protein bL36c (rpl36) (Porphyra purpurea (Red seaweed)).